A 185-amino-acid chain; its full sequence is Large ribosomal subunit protein uL5 (185 aa).

This sequence belongs to the universal ribosomal protein uL5 family. As to quaternary structure, part of the 50S ribosomal subunit; part of the 5S rRNA/L5/L18/L25 subcomplex. Contacts the 5S rRNA and the P site tRNA. Forms a bridge to the 30S subunit in the 70S ribosome.

Functionally, this is one of the proteins that bind and probably mediate the attachment of the 5S RNA into the large ribosomal subunit, where it forms part of the central protuberance. In the 70S ribosome it contacts protein S13 of the 30S subunit (bridge B1b), connecting the 2 subunits; this bridge is implicated in subunit movement. Contacts the P site tRNA; the 5S rRNA and some of its associated proteins might help stabilize positioning of ribosome-bound tRNAs. This chain is Large ribosomal subunit protein uL5, found in Azorhizobium caulinodans (strain ATCC 43989 / DSM 5975 / JCM 20966 / LMG 6465 / NBRC 14845 / NCIMB 13405 / ORS 571).